The chain runs to 501 residues: ATP synthase subunit alpha (501 aa).

Position 169–176 (169–176 (GDRQTGKT)) interacts with ATP.

This sequence belongs to the ATPase alpha/beta chains family. In terms of assembly, F-type ATPases have 2 components, CF(1) - the catalytic core - and CF(0) - the membrane proton channel. CF(1) has five subunits: alpha(3), beta(3), gamma(1), delta(1), epsilon(1). CF(0) has three main subunits: a(1), b(2) and c(9-12). The alpha and beta chains form an alternating ring which encloses part of the gamma chain. CF(1) is attached to CF(0) by a central stalk formed by the gamma and epsilon chains, while a peripheral stalk is formed by the delta and b chains.

It is found in the cell membrane. It carries out the reaction ATP + H2O + 4 H(+)(in) = ADP + phosphate + 5 H(+)(out). Produces ATP from ADP in the presence of a proton gradient across the membrane. The alpha chain is a regulatory subunit. The protein is ATP synthase subunit alpha of Streptococcus pneumoniae (strain 70585).